Here is an 89-residue protein sequence, read N- to C-terminus: Small ribosomal subunit protein uS15 (89 aa).

This sequence belongs to the universal ribosomal protein uS15 family. As to quaternary structure, part of the 30S ribosomal subunit. Forms a bridge to the 50S subunit in the 70S ribosome, contacting the 23S rRNA.

Its function is as follows. One of the primary rRNA binding proteins, it binds directly to 16S rRNA where it helps nucleate assembly of the platform of the 30S subunit by binding and bridging several RNA helices of the 16S rRNA. Forms an intersubunit bridge (bridge B4) with the 23S rRNA of the 50S subunit in the ribosome. This Sodalis glossinidius (strain morsitans) protein is Small ribosomal subunit protein uS15.